A 652-amino-acid polypeptide reads, in one-letter code: DNA ligase (652 aa).

NAD(+) is bound by residues 29–33, 78–79, and Glu107; these read DSDYD and SL. Lys109 acts as the N6-AMP-lysine intermediate in catalysis. Arg130, Glu164, Lys278, and Lys302 together coordinate NAD(+). Residues Cys395, Cys398, Cys413, and Cys418 each coordinate Zn(2+). Residues 577–652 form the BRCT domain; that stretch reads NSDAALFGLT…IEDEDWLRQL (76 aa).

Belongs to the NAD-dependent DNA ligase family. LigA subfamily. The cofactor is Mg(2+). Requires Mn(2+) as cofactor.

It carries out the reaction NAD(+) + (deoxyribonucleotide)n-3'-hydroxyl + 5'-phospho-(deoxyribonucleotide)m = (deoxyribonucleotide)n+m + AMP + beta-nicotinamide D-nucleotide.. In terms of biological role, DNA ligase that catalyzes the formation of phosphodiester linkages between 5'-phosphoryl and 3'-hydroxyl groups in double-stranded DNA using NAD as a coenzyme and as the energy source for the reaction. It is essential for DNA replication and repair of damaged DNA. This is DNA ligase from Streptococcus pyogenes serotype M3 (strain ATCC BAA-595 / MGAS315).